The following is a 41-amino-acid chain: Hemoglobin subunit beta (41 aa).

The 41-residue stretch at 1 to 41 folds into the Globin domain; sequence LGNVLVCVLAHHFGKEFTPQVQAAYQKVVAGVANALAHKYH. N6-acetyllysine is present on Lys-39.

The protein belongs to the globin family. In terms of assembly, heterotetramer of two alpha chains and two beta chains. In terms of tissue distribution, red blood cells.

Functionally, involved in oxygen transport from the lung to the various peripheral tissues. The sequence is that of Hemoglobin subunit beta (HBB) from Colobus guereza (Mantled guereza).